The primary structure comprises 205 residues: High frequency lysogenization protein HflD homolog (205 aa).

The protein belongs to the HflD family.

It is found in the cytoplasm. Its subcellular location is the cell inner membrane. The chain is High frequency lysogenization protein HflD homolog from Shewanella oneidensis (strain ATCC 700550 / JCM 31522 / CIP 106686 / LMG 19005 / NCIMB 14063 / MR-1).